The following is a 295-amino-acid chain: Zygote arrest protein 1.S (295 aa).

2 disordered regions span residues 80 to 115 and 144 to 186; these read SVQCSLGPRTLLRRRPGALRKPPPEQGSPASPTKTV and EKGE…APAQ. Residues 144–176 are compositionally biased toward basic and acidic residues; it reads EKGEAVRSEGSEGGRQEGKQGDGEIKEQMKMDK. The 3CxxC-type zinc finger occupies 197-280; the sequence is KYGYYHCKDC…RQDLCGRCKG (84 aa).

The protein belongs to the ZAR1 family. Ovary. Also expressed in lung and muscle.

It localises to the cytoplasm. It is found in the cytoplasmic ribonucleoprotein granule. In terms of biological role, mRNA-binding protein required for maternal mRNA storage, translation and degradation during oocyte maturation. Probably promotes formation of some phase-separated membraneless compartment that stores maternal mRNAs in oocytes: acts by undergoing liquid-liquid phase separation upon binding to maternal mRNAs. Binds to the 3'-UTR of maternal mRNAs in immature oocytes, inhibiting their translation. The protein is Zygote arrest protein 1.S (zar1.S) of Xenopus laevis (African clawed frog).